The following is a 461-amino-acid chain: MAQVLTQFDTIAAISTPIGEGGISIVRLSGEDAVAIANKLFKGADLTQVPSHTIHYGHIVDPKTKDVVDETMVSVLRAPKTFTREDMVEINCHGGMIVTNDILQLLLANGARMADPGEFTKRAFMNGRIDLTQAESVMDIVRAKTDKSRQVAMTQLAGGLLDKIRTMRQELLDTMAHEEVNIDYPEYDMDDLTSQEMKKKAEEVSKQIDQLLKTAQEGKIIRNGLATAIVGRPNVGKSSLLNYLTQDDKAIVTDIAGTTRDTLEEYVSVKGVPLKLIDTAGIHHTEDKVEKIGVERSKKAIAEADLVLLLLDASQDLTDEDKNLLNLTANKKRIIILNKQDLGTKISQEMIREITDNPIIVTSILKQENMAALENAIEQLFFSGIENSQNQILVTNQRQAGLLAKAKQSLEDVVNGIDDAMPLDLVQIDLKNAWDTLGEITGESAPDELITQLFSQFCLGK.

Positions 27, 89, and 128 each coordinate (6S)-5-formyl-5,6,7,8-tetrahydrofolate. The 159-residue stretch at 224 to 382 (GLATAIVGRP…LENAIEQLFF (159 aa)) folds into the TrmE-type G domain. N234 contributes to the K(+) binding site. GTP-binding positions include 234-239 (NVGKSS), 253-259 (TDIAGTT), and 278-281 (DTAG). Position 238 (S238) interacts with Mg(2+). The K(+) site is built by T253, I255, and T258. T259 is a binding site for Mg(2+). K461 contacts (6S)-5-formyl-5,6,7,8-tetrahydrofolate.

Belongs to the TRAFAC class TrmE-Era-EngA-EngB-Septin-like GTPase superfamily. TrmE GTPase family. As to quaternary structure, homodimer. Heterotetramer of two MnmE and two MnmG subunits. The cofactor is K(+).

The protein resides in the cytoplasm. Its function is as follows. Exhibits a very high intrinsic GTPase hydrolysis rate. Involved in the addition of a carboxymethylaminomethyl (cmnm) group at the wobble position (U34) of certain tRNAs, forming tRNA-cmnm(5)s(2)U34. The sequence is that of tRNA modification GTPase MnmE from Lactobacillus johnsonii (strain CNCM I-12250 / La1 / NCC 533).